We begin with the raw amino-acid sequence, 31 residues long: Kappa-sparatoxin-Hv1c (31 aa).

Intrachain disulfides connect C2–C16, C9–C21, and C15–C25. At W31 the chain carries Tryptophan amide.

Expressed by the venom gland.

The protein resides in the secreted. Its function is as follows. Blocks transient outward voltage-gated potassium channels in rat ventricular myocytes (thus prolonging action-potential duration) and rat Kv4.2/KCNA4 channels expressed in Xenopus oocytes. Is also a weak blocker of calcium channels in rat cerebellar granule cells. The polypeptide is Kappa-sparatoxin-Hv1c (Heteropoda venatoria (Brown huntsman spider)).